A 169-amino-acid polypeptide reads, in one-letter code: Crossover junction endodeoxyribonuclease RuvC (169 aa).

Active-site residues include Asp12, Glu72, and Asp144. Mg(2+) contacts are provided by Asp12, Glu72, and Asp144.

The protein belongs to the RuvC family. Homodimer which binds Holliday junction (HJ) DNA. The HJ becomes 2-fold symmetrical on binding to RuvC with unstacked arms; it has a different conformation from HJ DNA in complex with RuvA. In the full resolvosome a probable DNA-RuvA(4)-RuvB(12)-RuvC(2) complex forms which resolves the HJ. It depends on Mg(2+) as a cofactor.

It localises to the cytoplasm. The enzyme catalyses Endonucleolytic cleavage at a junction such as a reciprocal single-stranded crossover between two homologous DNA duplexes (Holliday junction).. In terms of biological role, the RuvA-RuvB-RuvC complex processes Holliday junction (HJ) DNA during genetic recombination and DNA repair. Endonuclease that resolves HJ intermediates. Cleaves cruciform DNA by making single-stranded nicks across the HJ at symmetrical positions within the homologous arms, yielding a 5'-phosphate and a 3'-hydroxyl group; requires a central core of homology in the junction. The consensus cleavage sequence is 5'-(A/T)TT(C/G)-3'. Cleavage occurs on the 3'-side of the TT dinucleotide at the point of strand exchange. HJ branch migration catalyzed by RuvA-RuvB allows RuvC to scan DNA until it finds its consensus sequence, where it cleaves and resolves the cruciform DNA. This chain is Crossover junction endodeoxyribonuclease RuvC, found in Xanthobacter autotrophicus (strain ATCC BAA-1158 / Py2).